A 370-amino-acid chain; its full sequence is MDLRKSPLYSKYIESNAKLVDFAGWEMPISFSGLIKEHESVRSSAGLFDISHMGVISVKGINPKDYIQKFFPTNLYSFSEGQGLYTVMLNDKGGIIDDLIIYDLGIQENDITELLLIVNASRYEEDFQWIKNNLNKDEISITNFKKAKVLLALQGKKSFDLFEEWIDSSISHIPNFGCEYKIFEHISPKEKIFFSKTGYTGENGLEILLSKKAAINLWDFSISKNVAPCGLGARDTLRLEAGMHLYGQDINEETSPYEAGLGWLVHLENNHEFFGRRFLEEQSRLGIQKKLVGLFIEGKAIGRKGCTVLKGEENIGTITSGSWSPTKQQAIAFAYINTSHALINNEVQVLIRGKKFKGVITKRAFYKKNY.

The protein belongs to the GcvT family. As to quaternary structure, the glycine cleavage system is composed of four proteins: P, T, L and H.

It catalyses the reaction N(6)-[(R)-S(8)-aminomethyldihydrolipoyl]-L-lysyl-[protein] + (6S)-5,6,7,8-tetrahydrofolate = N(6)-[(R)-dihydrolipoyl]-L-lysyl-[protein] + (6R)-5,10-methylene-5,6,7,8-tetrahydrofolate + NH4(+). The glycine cleavage system catalyzes the degradation of glycine. This chain is Aminomethyltransferase, found in Prochlorococcus marinus (strain MIT 9301).